A 576-amino-acid chain; its full sequence is Sodium/proton antiporter 1 (576 aa).

A chloroplast-targeting transit peptide spans 1–60 (MAVFPIGSHFAPPHQLTKRHVIATSSPISISTRLPQNVSFSKVSGVTGSTRLSKHGVLVR). Helical transmembrane passes span 237–257 (TLLW…DNLT), 279–299 (LGGV…IGDV), 320–340 (FLPS…TSEV), 357–377 (APRG…VPVF), 379–399 (ALTG…LWIL), 426–446 (GALF…AGIL), 462–482 (LIAS…LVAA), 501–521 (LIAF…AAGV), and 541–561 (FAFA…NLHF).

This sequence belongs to the NhaD Na(+)/H(+) (TC 2.A.62) antiporter family. In terms of tissue distribution, mostly expressed in mature and senescent leaves, and, to a lower extent, in seeds, roots, shoots, flowers and developing siliques.

It is found in the plastid. The protein localises to the chloroplast membrane. It localises to the chloroplast envelope. Functionally, na(+)/H(+) antiporter that extrudes sodium in exchange for external protons. The protein is Sodium/proton antiporter 1 of Arabidopsis thaliana (Mouse-ear cress).